Consider the following 815-residue polypeptide: Cilia- and flagella-associated protein 251 (815 aa).

WD repeat units lie at residues 58-99, 103-148, 166-205, 218-257, 271-308, 379-418, 420-460, 463-502, 511-553, and 573-612; these read GHTS…PTRT, PHRH…TPPE, PAGD…PRFQ, QSVG…AQVG, IHNC…VAWF, SLLA…LLGG, AFER…DLYV, NTAA…HTMR, SHHG…VAAG, and SFAP…LERS.

In terms of assembly, identified in a spoke-associated complex containing CFAP61, CFAP91 and CFAP251; the complex is associated with the radial spokes in the axoneme. The complex associates with Calmodulin; the association is calcium sensitive.

It localises to the cytoplasm. The protein localises to the cytoskeleton. The protein resides in the flagellum axoneme. In terms of biological role, as component of a spoke-associated complex, regulates flagellar dynein activity by mediating regulatory signals between the radial spokes and dynein arms. In Chlamydomonas reinhardtii (Chlamydomonas smithii), this protein is Cilia- and flagella-associated protein 251.